Reading from the N-terminus, the 365-residue chain is DNA replication and repair protein RecF (365 aa).

Residue 30–37 (GRNAQGKT) participates in ATP binding.

It belongs to the RecF family.

It is found in the cytoplasm. Its function is as follows. The RecF protein is involved in DNA metabolism; it is required for DNA replication and normal SOS inducibility. RecF binds preferentially to single-stranded, linear DNA. It also seems to bind ATP. This Streptococcus pneumoniae (strain CGSP14) protein is DNA replication and repair protein RecF.